Consider the following 466-residue polypeptide: Ribosomal protein uS12 methylthiotransferase RimO (466 aa).

Residues 15-125 enclose the MTTase N-terminal domain; it reads PKVGFVSLGC…VMEAVHAALP (111 aa). 6 residues coordinate [4Fe-4S] cluster: cysteine 24, cysteine 60, cysteine 89, cysteine 156, cysteine 160, and cysteine 163. Residues 142–380 enclose the Radical SAM core domain; that stretch reads LTPRHYAYLK…AKQAEISALR (239 aa). In terms of domain architecture, TRAM spans 382–450; the sequence is EAKIGSVQQC…EHDLFGDALP (69 aa).

This sequence belongs to the methylthiotransferase family. RimO subfamily. [4Fe-4S] cluster is required as a cofactor.

The protein localises to the cytoplasm. The catalysed reaction is L-aspartate(89)-[ribosomal protein uS12]-hydrogen + (sulfur carrier)-SH + AH2 + 2 S-adenosyl-L-methionine = 3-methylsulfanyl-L-aspartate(89)-[ribosomal protein uS12]-hydrogen + (sulfur carrier)-H + 5'-deoxyadenosine + L-methionine + A + S-adenosyl-L-homocysteine + 2 H(+). Functionally, catalyzes the methylthiolation of an aspartic acid residue of ribosomal protein uS12. In Xanthomonas oryzae pv. oryzae (strain MAFF 311018), this protein is Ribosomal protein uS12 methylthiotransferase RimO.